The following is a 113-amino-acid chain: UPF0342 protein MGAS2096_Spy0691 (113 aa).

This sequence belongs to the UPF0342 family.

This is UPF0342 protein MGAS2096_Spy0691 from Streptococcus pyogenes serotype M12 (strain MGAS2096).